The primary structure comprises 114 residues: Somatostatin-1A (114 aa).

Residues 1–24 (MLSTRIQCALALLSLALAVCSVSA) form the signal peptide. Residues 25-88 (APTDAKLRQL…KDEVRLELER (64 aa)) constitute a propeptide that is removed on maturation. Cys103 and Cys114 are disulfide-bonded.

It belongs to the somatostatin family.

The protein localises to the secreted. Functionally, somatostatin inhibits the release of somatotropin. The chain is Somatostatin-1A (sst1a) from Carassius auratus (Goldfish).